A 200-amino-acid polypeptide reads, in one-letter code: Large ribosomal subunit protein uL4 (200 aa).

Residues 38-72 (GRQGTKQQKTRSDVAGGGKRPWRQKGTGRARAGTT) form a disordered region.

Belongs to the universal ribosomal protein uL4 family. As to quaternary structure, part of the 50S ribosomal subunit.

In terms of biological role, one of the primary rRNA binding proteins, this protein initially binds near the 5'-end of the 23S rRNA. It is important during the early stages of 50S assembly. It makes multiple contacts with different domains of the 23S rRNA in the assembled 50S subunit and ribosome. Functionally, forms part of the polypeptide exit tunnel. In Pseudomonas entomophila (strain L48), this protein is Large ribosomal subunit protein uL4.